The sequence spans 394 residues: Probable cytosolic iron-sulfur protein assembly protein 1 (394 aa).

WD repeat units lie at residues Ala-10–Leu-49, Ala-56–Ser-108, Gly-144–Glu-184, Asp-191–Ser-230, Gly-237–Ile-284, Ile-313–Ile-352, and Ala-359–Pro-394.

Belongs to the WD repeat CIA1 family. Interacts with NAR1.

The protein resides in the cytoplasm. Its subcellular location is the nucleus. Functionally, essential component of the cytosolic iron-sulfur (Fe/S) protein assembly machinery. Required for the maturation of extramitochondrial Fe/S proteins. In Debaryomyces hansenii (strain ATCC 36239 / CBS 767 / BCRC 21394 / JCM 1990 / NBRC 0083 / IGC 2968) (Yeast), this protein is Probable cytosolic iron-sulfur protein assembly protein 1.